A 184-amino-acid polypeptide reads, in one-letter code: Shikimate kinase (184 aa).

Residue glycine 20–arginine 25 participates in ATP binding. Serine 24 serves as a coordination point for Mg(2+). Aspartate 42, arginine 66, and glycine 88 together coordinate substrate. Arginine 127 contacts ATP. Arginine 146 is a binding site for substrate. An ATP-binding site is contributed by arginine 162.

This sequence belongs to the shikimate kinase family. In terms of assembly, monomer. The cofactor is Mg(2+).

The protein resides in the cytoplasm. The enzyme catalyses shikimate + ATP = 3-phosphoshikimate + ADP + H(+). The protein operates within metabolic intermediate biosynthesis; chorismate biosynthesis; chorismate from D-erythrose 4-phosphate and phosphoenolpyruvate: step 5/7. Its function is as follows. Catalyzes the specific phosphorylation of the 3-hydroxyl group of shikimic acid using ATP as a cosubstrate. This is Shikimate kinase from Thermus thermophilus (strain ATCC BAA-163 / DSM 7039 / HB27).